The primary structure comprises 406 residues: Succinylornithine transaminase (406 aa).

The residue at position 252 (lysine 252) is an N6-(pyridoxal phosphate)lysine.

The protein belongs to the class-III pyridoxal-phosphate-dependent aminotransferase family. AstC subfamily. Pyridoxal 5'-phosphate is required as a cofactor.

It carries out the reaction N(2)-succinyl-L-ornithine + 2-oxoglutarate = N-succinyl-L-glutamate 5-semialdehyde + L-glutamate. Its pathway is amino-acid degradation; L-arginine degradation via AST pathway; L-glutamate and succinate from L-arginine: step 3/5. Functionally, catalyzes the transamination of N(2)-succinylornithine and alpha-ketoglutarate into N(2)-succinylglutamate semialdehyde and glutamate. Can also act as an acetylornithine aminotransferase. This chain is Succinylornithine transaminase, found in Escherichia coli O45:K1 (strain S88 / ExPEC).